Here is a 217-residue protein sequence, read N- to C-terminus: Large ribosomal subunit protein uL1A (217 aa).

At Ser2 the chain carries N-acetylserine. Lys47 is modified (N6-methyllysine; by RKM5). Residues Ser79 and Ser86 each carry the phosphoserine modification.

This sequence belongs to the universal ribosomal protein uL1 family. Component of the large ribosomal subunit (LSU). Mature yeast ribosomes consist of a small (40S) and a large (60S) subunit. The 40S small subunit contains 1 molecule of ribosomal RNA (18S rRNA) and 33 different proteins (encoded by 57 genes). The large 60S subunit contains 3 rRNA molecules (25S, 5.8S and 5S rRNA) and 46 different proteins (encoded by 81 genes). uL1 forms part of the L1 stalk. Post-translationally, N-terminally acetylated by acetyltransferase NatA.

Its subcellular location is the cytoplasm. In terms of biological role, component of the ribosome, a large ribonucleoprotein complex responsible for the synthesis of proteins in the cell. The small ribosomal subunit (SSU) binds messenger RNAs (mRNAs) and translates the encoded message by selecting cognate aminoacyl-transfer RNA (tRNA) molecules. The large subunit (LSU) contains the ribosomal catalytic site termed the peptidyl transferase center (PTC), which catalyzes the formation of peptide bonds, thereby polymerizing the amino acids delivered by tRNAs into a polypeptide chain. The nascent polypeptides leave the ribosome through a tunnel in the LSU and interact with protein factors that function in enzymatic processing, targeting, and the membrane insertion of nascent chains at the exit of the ribosomal tunnel. uL1 forms part of the L1 stalk, a mobile element that plays a role in evacuating the exit-site tRNA. The protein is Large ribosomal subunit protein uL1A of Saccharomyces cerevisiae (strain ATCC 204508 / S288c) (Baker's yeast).